A 709-amino-acid chain; its full sequence is ATP-binding cassette sub-family F member 3 (709 aa).

Position 2 is an N-acetylalanine (alanine 2). A Phosphoserine modification is found at serine 83. A compositionally biased stretch (basic and acidic residues) spans 129 to 143 (RLKAKQEKRSEKDTL). The interval 129 to 171 (RLKAKQEKRSEKDTLKTSNPLVLEEASASQAGSRKESRLESSG) is disordered. Serine 155, serine 157, and serine 161 each carry phosphoserine. Positions 161-171 (SRKESRLESSG) are enriched in basic and acidic residues. ABC transporter domains are found at residues 178-424 (VRIE…LNQQ) and 492-707 (LQLD…RREG). 210-217 (GRNGLGKT) contributes to the ATP binding site. Serine 283 is subject to Phosphoserine. 525-532 (GENGAGKS) is an ATP binding site.

It belongs to the ABC transporter superfamily. ABCF family. EF3 subfamily.

Its function is as follows. Displays an antiviral effect against flaviviruses in the presence of OAS1B. The sequence is that of ATP-binding cassette sub-family F member 3 (ABCF3) from Pongo abelii (Sumatran orangutan).